Here is a 215-residue protein sequence, read N- to C-terminus: HTH-type transcriptional repressor FabR (215 aa).

The region spanning 10-70 is the HTH tetR-type domain; the sequence is KTRRSLVEAA…TMVDESGLML (61 aa). The H-T-H motif DNA-binding region spans 33 to 52; the sequence is SLREVAREAVIAPTSFYRHF.

Homodimer.

The protein localises to the cytoplasm. In terms of biological role, represses the transcription of fabB, involved in unsaturated fatty acid (UFA) biosynthesis. By controlling UFA production, FabR directly influences the physical properties of the membrane bilayer. The protein is HTH-type transcriptional repressor FabR of Escherichia coli (strain K12 / MC4100 / BW2952).